A 151-amino-acid chain; its full sequence is Alpha-latroinsectotoxin-Lh1a (151 aa).

ANK repeat units lie at residues 21-37 (TDVT…DLNA), 41-52 (ILIRNTNAVINI), 56-80 (VGLT…YLND), 84-104 (NGMT…VDFL), 105-116 (KWTPLHLAILFK), 117-125 (QLVIELLAK), 126-146 (TFFD…AVEK), and 147-151 (YIAAR).

Belongs to the cationic peptide 01 (latrotoxin) family. 02 (alpha-latroinsectotoxin) subfamily. In terms of assembly, homotetramer in membranes. Expressed by the venom gland.

The protein resides in the secreted. It localises to the target cell membrane. Its function is as follows. Insecticidal presynaptic neurotoxin that induces massive neurotransmitter release at insect (but not vertebrate) neuromuscular junctions. Native toxin forms cation-permeable pores (with high permeability to calcium) in lipid membranes locust muscle membrane and artificial lipid bilayers. May bind to insect neurexin-1 homolog, insect adhesion G protein-coupled receptor L1 homolog, and insect receptor-type tyrosine-protein phosphatase S homolog, and induces neurotransmitter exocytosis both by forming tetrameric pores in membranes and signaling via G protein-coupled receptor. Oligomerization is a process independent of divalent cations. The toxin forms channels with 0.55-0.58 nm entrance diameter and a relatively small conductance in planar phospholipid membranes. This chain is Alpha-latroinsectotoxin-Lh1a, found in Latrodectus hasselti (Redback spider).